Here is a 614-residue protein sequence, read N- to C-terminus: Glucosidase 2 subunit beta (614 aa).

A signal peptide spans 1–19 (MGLHAILLLLLLRISASAA). Asn115 carries N-linked (GlcNAc...) asparagine glycosylation. Composition is skewed to basic and acidic residues over residues 194-222 (EEERLRKEKEEKRMKEEAEKQAADEKKAS), 231-272 (QENH…HDPE), and 324-351 (TGEKVDEVSKDDKNEHEAEHDMPEHSEE). The disordered stretch occupies residues 194–396 (EEERLRKEKE…SHESDDEYVD (203 aa)). Residues 352–364 (THEDESDVPESAE) show a composition bias toward acidic residues. Basic and acidic residues predominate over residues 372 to 382 (SEVEDDRHKYD). Residues 383–396 (DEDFSHESDDEYVD) are compositionally biased toward acidic residues. Residues 497–592 (DQCFESKEGK…VLSTPALCDE (96 aa)) enclose the MRH domain. 3 cysteine pairs are disulfide-bonded: Cys499–Cys512, Cys549–Cys578, and Cys563–Cys590.

In terms of assembly, heterodimer of a catalytic alpha subunit and a beta subunit.

It is found in the endoplasmic reticulum. It functions in the pathway glycan metabolism; N-glycan metabolism. Functionally, regulatory subunit of glucosidase II. May be required for defense response elicited by pathogen-associated molecular patterns (PAMPs). This is Glucosidase 2 subunit beta from Oryza sativa subsp. japonica (Rice).